A 234-amino-acid polypeptide reads, in one-letter code: Large ribosomal subunit protein uL1 (234 aa).

It belongs to the universal ribosomal protein uL1 family. Part of the 50S ribosomal subunit.

In terms of biological role, binds directly to 23S rRNA. The L1 stalk is quite mobile in the ribosome, and is involved in E site tRNA release. Its function is as follows. Protein L1 is also a translational repressor protein, it controls the translation of the L11 operon by binding to its mRNA. The polypeptide is Large ribosomal subunit protein uL1 (Salmonella arizonae (strain ATCC BAA-731 / CDC346-86 / RSK2980)).